The primary structure comprises 68 residues: Large ribosomal subunit protein uL29 (68 aa).

The protein belongs to the universal ribosomal protein uL29 family.

This Chlorobaculum tepidum (strain ATCC 49652 / DSM 12025 / NBRC 103806 / TLS) (Chlorobium tepidum) protein is Large ribosomal subunit protein uL29.